The following is a 634-amino-acid chain: Chaperone protein DnaK (634 aa).

Threonine 197 carries the post-translational modification Phosphothreonine; by autocatalysis. The segment at 592–634 (IGSSVYQQPGNQPPAPGGPNANASDDKGPDDDVIDADFTETKD) is disordered. The span at 619-634 (GPDDDVIDADFTETKD) shows a compositional bias: acidic residues.

It belongs to the heat shock protein 70 family.

In terms of biological role, acts as a chaperone. The sequence is that of Chaperone protein DnaK from Prochlorococcus marinus (strain MIT 9515).